We begin with the raw amino-acid sequence, 224 residues long: tRNA (guanine-N(7)-)-methyltransferase (224 aa).

S-adenosyl-L-methionine-binding residues include Glu-45, Glu-70, Asp-97, and Asp-119. Asp-119 is an active-site residue. Substrate-binding positions include Lys-123, Asp-155, and 199–202 (TEYE).

Belongs to the class I-like SAM-binding methyltransferase superfamily. TrmB family.

It catalyses the reaction guanosine(46) in tRNA + S-adenosyl-L-methionine = N(7)-methylguanosine(46) in tRNA + S-adenosyl-L-homocysteine. Its pathway is tRNA modification; N(7)-methylguanine-tRNA biosynthesis. In terms of biological role, catalyzes the formation of N(7)-methylguanine at position 46 (m7G46) in tRNA. This chain is tRNA (guanine-N(7)-)-methyltransferase, found in Ureaplasma urealyticum serovar 10 (strain ATCC 33699 / Western).